Here is a 392-residue protein sequence, read N- to C-terminus: Succinyl-diaminopimelate desuccinylase (392 aa).

Position 75 (histidine 75) interacts with Zn(2+). Residue aspartate 77 is part of the active site. Position 108 (aspartate 108) interacts with Zn(2+). The active-site Proton acceptor is the glutamate 147. Zn(2+) contacts are provided by glutamate 148, glutamate 176, and histidine 365.

This sequence belongs to the peptidase M20A family. DapE subfamily. As to quaternary structure, homodimer. The cofactor is Zn(2+). Co(2+) serves as cofactor.

It catalyses the reaction N-succinyl-(2S,6S)-2,6-diaminopimelate + H2O = (2S,6S)-2,6-diaminopimelate + succinate. The protein operates within amino-acid biosynthesis; L-lysine biosynthesis via DAP pathway; LL-2,6-diaminopimelate from (S)-tetrahydrodipicolinate (succinylase route): step 3/3. Catalyzes the hydrolysis of N-succinyl-L,L-diaminopimelic acid (SDAP), forming succinate and LL-2,6-diaminopimelate (DAP), an intermediate involved in the bacterial biosynthesis of lysine and meso-diaminopimelic acid, an essential component of bacterial cell walls. The sequence is that of Succinyl-diaminopimelate desuccinylase from Rhodopseudomonas palustris (strain BisB18).